We begin with the raw amino-acid sequence, 435 residues long: Protoheme IX farnesyltransferase, mitochondrial (435 aa).

A mitochondrion-targeting transit peptide spans 1 to 35 (MPALCATYLIHSGNLRACLRIVPLTKPSVVIAYRH). Transmembrane regions (helical) follow at residues 135–155 (VLVM…ATVL), 157–177 (LLSL…INMG), 212–232 (GVIG…LLGA), 250–270 (IINT…GWAA), 324–344 (VALR…YYGI), and 401–421 (FWVS…HKKG).

Belongs to the UbiA prenyltransferase family.

It is found in the mitochondrion membrane. Functionally, converts protoheme IX and farnesyl diphosphate to heme O. This is Protoheme IX farnesyltransferase, mitochondrial (COX10) from Eremothecium gossypii (strain ATCC 10895 / CBS 109.51 / FGSC 9923 / NRRL Y-1056) (Yeast).